The sequence spans 297 residues: tRNA pseudouridine synthase B (297 aa).

Asp41 serves as the catalytic Nucleophile.

It belongs to the pseudouridine synthase TruB family. Type 1 subfamily.

It catalyses the reaction uridine(55) in tRNA = pseudouridine(55) in tRNA. In terms of biological role, responsible for synthesis of pseudouridine from uracil-55 in the psi GC loop of transfer RNAs. This chain is tRNA pseudouridine synthase B, found in Synechococcus sp. (strain CC9311).